Consider the following 335-residue polypeptide: MMLNATEFLTPNAINVDAVDETNAKVTLEPLERGFGHTLGNALRRILLSSLPGAAVIEAEIEGVDHEYSTLEGLQEDVLDLLLNLKGLAITMHDQNEVFLTLDKKGPGIITAADIELPHNVDIVNPELVLGTLGDRGHLKMRLRVVMGRGYEPANLRREDGDTKAIGRLKLDASFSPVSRVAYQVENARVEQRTDLDRLIIELETNGTIDPEEAIRKAATILQQQISIFVDLEAEEAPEPVKEKEEVDPVLLRPVDDLELTVRSANCLKAENIYYIGDLVQRSETELLKTPNLGKKSLTEIKDVLASKGLELDMRLENWPPADLRVDDRFSYRSR.

Positions 1–233 (MMLNATEFLT…QQISIFVDLE (233 aa)) are alpha N-terminal domain (alpha-NTD). The tract at residues 247–335 (VDPVLLRPVD…VDDRFSYRSR (89 aa)) is alpha C-terminal domain (alpha-CTD).

The protein belongs to the RNA polymerase alpha chain family. In terms of assembly, homodimer. The RNAP catalytic core consists of 2 alpha, 1 beta, 1 beta' and 1 omega subunit. When a sigma factor is associated with the core the holoenzyme is formed, which can initiate transcription.

The enzyme catalyses RNA(n) + a ribonucleoside 5'-triphosphate = RNA(n+1) + diphosphate. In terms of biological role, DNA-dependent RNA polymerase catalyzes the transcription of DNA into RNA using the four ribonucleoside triphosphates as substrates. In Psychrobacter sp. (strain PRwf-1), this protein is DNA-directed RNA polymerase subunit alpha.